Here is a 436-residue protein sequence, read N- to C-terminus: 4-hydroxyphenylpyruvate dioxygenase (436 aa).

VOC domains follow at residues 38–194 (RFHH…GFEV) and 210–370 (RLDH…IFTK). Fe cation-binding residues include histidine 213, histidine 295, and glutamate 381.

It belongs to the 4HPPD family. The cofactor is Fe cation.

It is found in the cytoplasm. The catalysed reaction is 3-(4-hydroxyphenyl)pyruvate + O2 = homogentisate + CO2. It participates in amino-acid degradation; L-phenylalanine degradation; acetoacetate and fumarate from L-phenylalanine: step 3/6. The protein operates within cofactor biosynthesis; prenylquinone biosynthesis. In Plectranthus scutellarioides (Coleus), this protein is 4-hydroxyphenylpyruvate dioxygenase.